The chain runs to 253 residues: H repeat-associated putative transposase YbfD (253 aa).

It belongs to the transposase 11 family.

In Escherichia coli (strain K12), this protein is H repeat-associated putative transposase YbfD (ybfD).